The following is a 480-amino-acid chain: 11S globulin subunit beta (480 aa).

The first 21 residues, 1–21, serve as a signal peptide directing secretion; it reads MARSSLFTFLCLAVFINGCLS. Residue Gln-22 is modified to Pyrrolidone carboxylic acid. 2 cysteine pairs are disulfide-bonded: Cys-48–Cys-81 and Cys-124–Cys-303. Cupin type-1 domains lie at 51–251 and 309–458; these read ENLR…GLVR and QNIG…EEAQ. Residues Lys-408 and Arg-468 each contribute to the Mg(2+) site.

This sequence belongs to the 11S seed storage protein (globulins) family. Hexamer; each subunit is composed of an acidic and a basic chain derived from a single precursor and linked by a disulfide bond.

This is a seed storage protein. The sequence is that of 11S globulin subunit beta from Cucurbita maxima (Pumpkin).